A 1141-amino-acid chain; its full sequence is Envelopment polyprotein (1141 aa).

A signal peptide spans 1–19 (MFCLCLSLLGLLLCWPAAT). At 20–489 (RNLLELKVEC…CVPGLHGWAT (470 aa)) the chain is on the lumenal side. Disulfide bonds link C29–C154, C63–C160, C112–C131, C136–C141, C178–C188, and C213–C252. N-linked (GlcNAc...) asparagine; by host glycosylation is present at N137. N352 is a glycosylation site (N-linked (GlcNAc...) asparagine; by host). 4 cysteine pairs are disulfide-bonded: C381/C440, C385/C394, C410/C429, and C457/C480. N404 carries N-linked (GlcNAc...) asparagine; by host glycosylation. Residues 490 to 510 (ISLLITFCFGWLAIPLLSMII) form a helical membrane-spanning segment. The Cytoplasmic portion of the chain corresponds to 511–632 (IRFLLIFTYL…LSMFRYKSKC (122 aa)). A binding to the ribonucleoprotein region spans residues 521–538 (CSKYSTDSKFKLIIEKVK). 2 CCHC-type zinc fingers span residues 550–570 (CEVC…KKSC) and 575–596 (CPYC…FKVC). Binding to the ribonucleoprotein regions lie at residues 593 to 610 (FKVC…KKSL), 597 to 608 (KLTTRFQENLKK), and 616 to 630 (KRGL…RYKS). Positions 612 to 653 (TYEPKRGLYRTLSMFRYKSKCYVGLVWCILLTMELIVWAASA) are inhibition of interferon induction. Positions 616–639 (KRGLYRTLSMFRYKSKCYVGLVWC) constitute an ITAM domain. Residues Y620 and Y633 each carry the phosphotyrosine modification. The YxxL signature appears at 620–623 (YRTL). A helical transmembrane segment spans residues 633-653 (YVGLVWCILLTMELIVWAASA). Over 654–1109 (ETINLEPGWT…EWLLGILSGN (456 aa)) the chain is Lumenal. Cystine bridges form between C740–C775, C744–C782, C756–C889, C770–C900, C785–C908, C811–C820, C828–C837, and C868–C872. The tract at residues 762-782 (FEFETGWGCNPPDCPGVGTGC) is fusion loop. N932 carries an N-linked (GlcNAc...) asparagine; by host glycan. 5 disulfides stabilise this stretch: C974-C1004, C997-C1049, C1014-C1019, C1050-C1055, and C1089-C1093. The helical transmembrane segment at 1110 to 1130 (WMVVAVLIALFIFSLLLFSLC) threads the bilayer. Residues 1126-1141 (LFSLCCPRRQNYKKNK) form a binding to the ribonucleoprotein region. Over 1131–1141 (CPRRQNYKKNK) the chain is Cytoplasmic.

It belongs to the hantavirus envelope glycoprotein family. Homodimer. Homotetramer; forms heterotetrameric Gn-Gc spikes in the pre-fusion conformation. Interacts (via C-terminus) with the nucleoprotein. Interacts with host TUFM; this interaction contributes to the virus-induced degradation of mitochondria by autophagy, which leads to degradation of host MAVS and inhibition of type I interferon (IFN) responses. Interacts with host MAP1LC3B; this interaction contributes to the virus-induced degradation of mitochondria by autophagy, which leads to degradation of host MAVS and inhibition of type I interferon (IFN) responses. In terms of assembly, homodimer. Homotetramer; forms heterotetrameric Gn-Gc spikes in the pre-fusion conformation. Homotrimer; forms homotrimer in the post-fusion conformation at acidic pH. Interacts (via C-terminus) with the nucleoprotein. Envelope polyprotein precursor is quickly cleaved in vivo just after synthesis, presumably by host signal peptidase.

It localises to the virion membrane. It is found in the host cell surface. The protein localises to the host Golgi apparatus membrane. The protein resides in the host endoplasmic reticulum membrane. Its subcellular location is the host mitochondrion. In terms of biological role, forms homotetramers with glycoprotein C at the surface of the virion. Attaches the virion to host cell receptors including integrin alpha5/ITGB1. This attachment induces virion internalization predominantly through clathrin-dependent endocytosis. Mediates the assembly and budding of infectious virus particles through its interaction with the nucleocapsid protein and the viral genome. May dysregulate normal immune and endothelial cell responses through an ITAM motif. Translocates to mitochondria, binds to host TUFM and recruits MAP1LC3B. These interactions induce mitochondrial autophagy and therefore destruction of host MAVS leading to inhibition of type I interferon (IFN) responses. Concomitant breakdown of glycoprotein N is apparently prevented by the nucleoprotein that may inhibit Gn-stimulated autophagosome-lysosome fusion. Interacts with the viral genomic RNA. Inhibits the host RIG-I/TBK1 pathway by disrupting the formation of TBK1-TRAF3 complexes and downstream signaling responses required for IFN-beta transcription. Its function is as follows. Forms homotetramers with glycoprotein N at the surface of the virion. Attaches the virion to host cell receptors including integrin ITGAV/ITGB3. This attachment induces virion internalization predominantly through clathrin-dependent endocytosis. Class II fusion protein that promotes fusion of viral membrane with host endosomal membrane after endocytosis of the virion. In Tula orthohantavirus (TULV), this protein is Envelopment polyprotein (GP).